Consider the following 93-residue polypeptide: uncharacterized protein (93 aa).

Positions Met-1–Ser-22 are cleaved as a signal peptide.

This is an uncharacterized protein from Escherichia coli (strain K12).